A 150-amino-acid polypeptide reads, in one-letter code: MTTSGVPFGMTLRPTRSRLSRRTPYSRDRLPPFETETRATILEDHPLLPECNTLTMHNAWTSPSPPVEQPQVGQQPVAQQLDSDMNLSELPGEFINITDERLARQETVWNITPKNMSVTHDMMLFKASRGERTVYSVCWEGGGRLNTRVL.

Residues 1-31 (MTTSGVPFGMTLRPTRSRLSRRTPYSRDRLP) form a disordered region. Positions 1-58 (MTTSGVPFGMTLRPTRSRLSRRTPYSRDRLPPFETETRATILEDHPLLPECNTLTMHN) match the Nuclear localization signal motif.

The protein belongs to the adenoviridae E4-orf6/7 family. As to quaternary structure, interacts with host E2F proteins.

Its subcellular location is the host nucleus. Functionally, modulates viral and host transcriptional activity to promote viral genome replication. Stimulates viral E2a promoter activity by binding and inducing dimerization of host E2F. During viral infection E1A protein binds to cellular retinablastoma (RB) family members and dissociates these repressors from a complex with E2F proteins. Free E2F is then bound to E4orf6/7 which leads to transactivation of viral E2 promoter, and cellular promoters such as E2F-1 promoter. Activation of cellular E2F targets promote cell cycle S phase and thereby possibly favorises viral DNA replication process. The protein is Early 4 ORF6/7 control protein of Human adenovirus C serotype 2 (HAdV-2).